The chain runs to 1055 residues: Type I restriction enzyme HindI endonuclease subunit (1055 aa).

The region spanning 287 to 468 (TSEKGDRRIG…QDVFGRYVSI (182 aa)) is the Helicase ATP-binding domain.

It belongs to the HsdR family. In terms of assembly, the type I restriction/modification system is composed of three polypeptides R, M and S; the restriction enzyme has stoichiometry R(2)M(2)S(1) while the methyltransferase is M(2)S(1).

The enzyme catalyses Endonucleolytic cleavage of DNA to give random double-stranded fragments with terminal 5'-phosphates, ATP is simultaneously hydrolyzed.. The restriction (R) subunit of a type I restriction enzyme that recognizes 5'-RAACN(5)TAG-3' and cleaves a random distance away. Subunit R is required for both nuclease and ATPase activities, but not for modification. After locating a non-methylated recognition site, the enzyme complex serves as a molecular motor that translocates DNA in an ATP-dependent manner until a collision occurs that triggers cleavage. The protein is Type I restriction enzyme HindI endonuclease subunit of Haemophilus influenzae (strain ATCC 51907 / DSM 11121 / KW20 / Rd).